A 140-amino-acid chain; its full sequence is Aspartate 1-decarboxylase (140 aa).

The active-site Schiff-base intermediate with substrate; via pyruvic acid is serine 25. Pyruvic acid (Ser) is present on serine 25. Residue threonine 57 coordinates substrate. The active-site Proton donor is the tyrosine 58. 73 to 75 contributes to the substrate binding site; that stretch reads GAA.

Belongs to the PanD family. In terms of assembly, heterooctamer of four alpha and four beta subunits. The cofactor is pyruvate. Is synthesized initially as an inactive proenzyme, which is activated by self-cleavage at a specific serine bond to produce a beta-subunit with a hydroxyl group at its C-terminus and an alpha-subunit with a pyruvoyl group at its N-terminus.

It is found in the cytoplasm. The catalysed reaction is L-aspartate + H(+) = beta-alanine + CO2. It participates in cofactor biosynthesis; (R)-pantothenate biosynthesis; beta-alanine from L-aspartate: step 1/1. Functionally, catalyzes the pyruvoyl-dependent decarboxylation of aspartate to produce beta-alanine. The sequence is that of Aspartate 1-decarboxylase from Persephonella marina (strain DSM 14350 / EX-H1).